Reading from the N-terminus, the 317-residue chain is Beta-ketoacyl-[acyl-carrier-protein] synthase III (317 aa).

Catalysis depends on residues Cys112 and His244. An ACP-binding region spans residues Gln245–Arg249. Asn274 is a catalytic residue.

Belongs to the thiolase-like superfamily. FabH family. In terms of assembly, homodimer.

It is found in the cytoplasm. It carries out the reaction malonyl-[ACP] + acetyl-CoA + H(+) = 3-oxobutanoyl-[ACP] + CO2 + CoA. The protein operates within lipid metabolism; fatty acid biosynthesis. In terms of biological role, catalyzes the condensation reaction of fatty acid synthesis by the addition to an acyl acceptor of two carbons from malonyl-ACP. Catalyzes the first condensation reaction which initiates fatty acid synthesis and may therefore play a role in governing the total rate of fatty acid production. Possesses both acetoacetyl-ACP synthase and acetyl transacylase activities. Its substrate specificity determines the biosynthesis of branched-chain and/or straight-chain of fatty acids. The protein is Beta-ketoacyl-[acyl-carrier-protein] synthase III of Citrobacter koseri (strain ATCC BAA-895 / CDC 4225-83 / SGSC4696).